A 548-amino-acid chain; its full sequence is Alpha-humulene synthase (548 aa).

Asp302, Asp306, and Glu453 together coordinate Mg(2+). Positions 302 to 306 (DDIYD) match the DDXXD motif motif.

The protein belongs to the terpene synthase family. As to expression, mostly expressed in rhizomes.

The enzyme catalyses (2E,6E)-farnesyl diphosphate = alpha-humulene + diphosphate. Catalyzes the formation of alpha-humulene in the first step of zerumbone biosynthesis, a highly promising multi-anticancer agent. Also mediates formation of beta-caryophyllene at a much lower level. In Zingiber zerumbet (Shampoo ginger), this protein is Alpha-humulene synthase (ZSS1).